A 1132-amino-acid polypeptide reads, in one-letter code: Phospholipid-transporting ATPase IG (1132 aa).

The Cytoplasmic portion of the chain corresponds to M1 to Q66. The helical transmembrane segment at F67–V85 threads the bilayer. Position 86 (D86) is a topological domain, extracellular. The chain crosses the membrane as a helical span at residues T87–I107. Residues K108–S290 are Cytoplasmic-facing. A helical membrane pass occupies residues I291 to T311. The Extracellular segment spans residues L312–D346. A helical membrane pass occupies residues F347–E367. Residues M368–Y879 are Cytoplasmic-facing. D412 (4-aspartylphosphate intermediate) is an active-site residue. Residues D412, K413, and T414 each coordinate ATP. A Mg(2+)-binding site is contributed by D412. T414 contributes to the Mg(2+) binding site. Residue S445 is modified to Phosphoserine. 9 residues coordinate ATP: E501, F543, K566, R597, T677, G678, D679, R792, and K798. A Mg(2+)-binding site is contributed by D819. 2 residues coordinate ATP: N822 and D823. D823 lines the Mg(2+) pocket. Residues F880–F900 form a helical membrane-spanning segment. Over S901–A908 the chain is Extracellular. Residues A909–L929 form a helical membrane-spanning segment. The Cytoplasmic portion of the chain corresponds to E930–Q955. A helical transmembrane segment spans residues L956 to G976. Topologically, residues T977 to N995 are extracellular. Residues W996–L1016 traverse the membrane as a helical segment. The Cytoplasmic portion of the chain corresponds to D1017–H1026. A helical transmembrane segment spans residues F1027–I1047. Over W1048–T1069 the chain is Extracellular. The chain crosses the membrane as a helical span at residues W1070–L1090. At K1091 to L1132 the chain is on the cytoplasmic side. Phosphoserine occurs at positions 1108, 1116, and 1126. Positions S1116–L1121 match the Di-leucine motif motif.

Belongs to the cation transport ATPase (P-type) (TC 3.A.3) family. Type IV subfamily. Component of a P4-ATPase flippase complex which consists of a catalytic alpha subunit ATP11C and an accessory beta subunit TMEM30A. Requires Mg(2+) as cofactor. In terms of processing, proteolytically cleaved by CASP3, CASP6 and CASP7. Phosphorylated at Ser-1116 likely by PRKCA; this creates a functional di-leucine motif that is sufficient for endocytosis. In terms of tissue distribution, widely expressed.

The protein resides in the cell membrane. Its subcellular location is the endoplasmic reticulum membrane. It localises to the early endosome membrane. The protein localises to the recycling endosome membrane. The enzyme catalyses ATP + H2O + phospholipidSide 1 = ADP + phosphate + phospholipidSide 2.. It catalyses the reaction a 1,2-diacyl-sn-glycero-3-phospho-L-serine(out) + ATP + H2O = a 1,2-diacyl-sn-glycero-3-phospho-L-serine(in) + ADP + phosphate + H(+). It carries out the reaction a 1,2-diacyl-sn-glycero-3-phosphoethanolamine(out) + ATP + H2O = a 1,2-diacyl-sn-glycero-3-phosphoethanolamine(in) + ADP + phosphate + H(+). Its activity is regulated as follows. The flippase activity is inactivated by caspase-mediated cleavage in apoptotic cells, allowing for PS exposure on the cell surface and engulfment of apoptotic cells by macrophages. The ATPase activity is up-regulated by aminophospholipids PS and PE and down-regulated by Increasing intracellular Ca2+ levels. In terms of biological role, catalytic component of a P4-ATPase flippase complex which catalyzes the hydrolysis of ATP coupled to the transport of aminophospholipids, phosphatidylserines (PS) and phosphatidylethanolamines (PE), from the outer to the inner leaflet of the plasma membrane. Major PS-flippase in immune cell subsets. In erythrocyte plasma membrane, it is required to maintain PS in the inner leaflet preventing its exposure on the surface. This asymmetric distribution is critical for the survival of erythrocytes in circulation since externalized PS is a phagocytic signal for erythrocyte clearance by splenic macrophages. Required for B cell differentiation past the pro-B cell stage. Seems to mediate PS flipping in pro-B cells. May be involved in the transport of cholestatic bile acids. This is Phospholipid-transporting ATPase IG from Homo sapiens (Human).